Reading from the N-terminus, the 359-residue chain is Type-1 angiotensin II receptor A (359 aa).

Residues 1–25 (MALNSSAEDGIKRIQDDCPKAGRHS) lie on the Extracellular side of the membrane. An N-linked (GlcNAc...) asparagine glycan is attached at N4. The angiotensin II site is built by Q15 and D17. 2 disulfide bridges follow: C18/C274 and C101/C180. The chain crosses the membrane as a helical span at residues 26–55 (YIFVMIPTLYSIIFVVGIFGNSLVVIVIYF). Topologically, residues 56–61 (YMKLKT) are cytoplasmic. The chain crosses the membrane as a helical span at residues 62 to 89 (VASVFLLNLALADLCFLLTLPLWAVYTA). The Extracellular segment spans residues 90 to 98 (MEYRWPFGN). The helical transmembrane segment at 99–125 (HLCKIASASVSFNLYASVFLLTCLSID) threads the bilayer. The Cytoplasmic segment spans residues 126 to 141 (RYLAIVHPMKSRLRRT). Residues 142 to 165 (MLVAKVTCIIIWLMAGLASLPAVI) traverse the membrane as a helical segment. Topologically, residues 166–190 (HRNVYFIENTNITVCAFHYESRNST) are extracellular. R167 serves as a coordination point for angiotensin II. Residue N176 is glycosylated (N-linked (GlcNAc...) asparagine). Residues F182, H183, and Y184 each coordinate angiotensin II. N188 carries N-linked (GlcNAc...) asparagine glycosylation. A helical transmembrane segment spans residues 191-216 (LPIGLGLTKNILGFLFPFLIILTSYT). Angiotensin II is bound at residue K199. Topologically, residues 217–239 (LIWKALKKAYEIQKNKPRNDDIF) are cytoplasmic. A helical transmembrane segment spans residues 240-268 (RIIMAIVLFFFFSWVPHQIFTFLDVLIQL). At 269–278 (GVIHDCKISD) the chain is on the extracellular side. The helical transmembrane segment at 279–304 (IVDTAMPITICIAYFNNCLNPLFYGF) threads the bilayer. Topologically, residues 305–359 (LGKKFKKYFLQLLKYIPPKAKSHSSLSTKMSTLSYRPSDNMSSSAKKPASCFEVE) are cytoplasmic. Polar residues predominate over residues 337–349 (LSYRPSDNMSSSA). The interval 337–359 (LSYRPSDNMSSSAKKPASCFEVE) is disordered. The S-palmitoyl cysteine moiety is linked to residue C355.

This sequence belongs to the G-protein coupled receptor 1 family. In terms of assembly, interacts with MAS1. Interacts with ARRB1. Interacts with FLNA (via filamin repeat 21); increases PKA-mediated phosphorylation of FLNA. In terms of processing, C-terminal Ser or Thr residues may be phosphorylated. In terms of tissue distribution, is expressed in the liver, kidney, aorta, lung, uterus, ovary, spleen, heart, adrenal gland, and vascular smooth muscle cell.

It is found in the cell membrane. Functionally, receptor for angiotensin II, a vasoconstricting peptide, which acts as a key regulator of blood pressure and sodium retention by the kidney. The activated receptor in turn couples to G-alpha proteins G(q) (GNAQ, GNA11, GNA14 or GNA15) and thus activates phospholipase C and increases the cytosolic Ca(2+) concentrations, which in turn triggers cellular responses such as stimulation of protein kinase C. The protein is Type-1 angiotensin II receptor A (Agtr1) of Rattus norvegicus (Rat).